The following is a 210-amino-acid chain: Phosphate propanoyltransferase (210 aa).

CoA is bound at residue 26–28; the sequence is ISN. Residues His-30 and His-32 each coordinate Zn(2+). CoA contacts are provided by Lys-71 and Arg-78. Phosphate is bound at residue Arg-84. The Zn(2+) site is built by Glu-90, His-138, His-140, and His-186. Asn-193 lines the CoA pocket.

This sequence belongs to the PduL family. Requires Zn(2+) as cofactor.

The protein resides in the bacterial microcompartment. It carries out the reaction propanoyl-CoA + phosphate = propanoyl phosphate + CoA. The protein operates within polyol metabolism; 1,2-propanediol degradation. Its function is as follows. Involved in 1,2-propanediol (1,2-PD) utilization within the bacterial microcompartment (BMC) dedicated to 1,2-PD degradation by catalyzing the conversion of propanoyl-CoA to propanoyl-phosphate. Required for optimal growth on 1,2-PD. CoA is regenerated within the BMC (for use by PduP) via this enzyme, although there must also be cofactor transport across the BMC. Directly targeted to the BMC. In terms of biological role, expression of a cosmid containing the full 21-gene pdu operon in E.coli allows E.coli to grow on 1,2-propanediol (1,2-PD) with the appearance of bacterial microcompartments (BMC) in its cytoplasm. The 1,2-PD-specific bacterial microcompartment (BMC) concentrates low levels of 1,2-PD catabolic enzymes, concentrates volatile reaction intermediates thus enhancing pathway flux and keeps the level of toxic, mutagenic propionaldehyde low. In Citrobacter freundii, this protein is Phosphate propanoyltransferase.